An 890-amino-acid chain; its full sequence is V-type proton ATPase subunit a, Golgi isoform (890 aa).

Methionine 1 bears the N-acetylmethionine mark. Residues 1–450 (MNQEEAIFRS…DAYGIATYKE (450 aa)) are Cytoplasmic-facing. Positions 113–154 (LENVNDMVKEITDCESRARQLDESLDSLRSKLNDLLEQRQVI) form a coiled coil. A phosphoserine mark is found at serine 223 and serine 228. Positions 297 to 347 (LKKVKRVIDSLNGKIVSLNTRSSELVDTLNRQIDDLQRILDTTEQTLHTEL) form a coiled coil. A helical transmembrane segment spans residues 451–469 (INAGLATVVTFPFMFAIMF). Residues 470 to 471 (GD) lie on the Vacuolar side of the membrane. The chain crosses the membrane as a helical span at residues 472–488 (MGHGFILFLMALFLVLN). Residues 489 to 502 (ERKFGAMHRDEIFD) lie on the Cytoplasmic side of the membrane. A helical transmembrane segment spans residues 503-532 (MAFTGRYVLLLMGAFSVYTGLLYNDIFSKS). Over 533 to 580 (MTIFKSGWQWPSTFRKGESIEAKKTGVYPFGLDFAWHGTDNGLLFSNS) the chain is Vacuolar. The helical transmembrane segment at 581 to 600 (YKMKLSILMGYAHMTYSFMF) threads the bilayer. The Cytoplasmic segment spans residues 601–618 (SYINYRAKNSKVDIIGNF). The helical transmembrane segment at 619 to 639 (IPGLVFMQSIFGYLSWAIVYK) threads the bilayer. The Vacuolar segment spans residues 640 to 682 (WSKDWIKDDKPAPGLLNMLINMFLAPGTIDDQLYSGQAKLQVV). A helical membrane pass occupies residues 683 to 702 (LLLAALVCVPWLLLYKPLTL). The Cytoplasmic segment spans residues 703-779 (RRLNKNGGGG…DVMIHQVIHT (77 aa)). Residues 780–804 (IEFCLNCISHTASYLRLWALSLAHA) form a helical membrane-spanning segment. The Vacuolar portion of the chain corresponds to 805 to 828 (QLSSVLWDMTISNAFSSKNSGSPL). A helical transmembrane segment spans residues 829–867 (AVMKVVFLFAMWFVLTVCILVFMEGTSAMLHALRLHWVE). The Cytoplasmic segment spans residues 868-890 (AMSKFFEGEGYAYEPFSFRAIIE).

The protein belongs to the V-ATPase 116 kDa subunit family. As to quaternary structure, V-ATPase is a heteromultimeric enzyme composed of a peripheral catalytic V1 complex (components A to H) attached to an integral membrane V0 proton pore complex (components: a, c, c', c'', d, e, f and VOA1). In terms of processing, glycosylated.

Its subcellular location is the endosome membrane. The protein resides in the golgi apparatus membrane. Subunit of the V0 complex of vacuolar(H+)-ATPase (V-ATPase), a multisubunit enzyme composed of a peripheral complex (V1) that hydrolyzes ATP and a membrane integral complex (V0) that translocates protons. V-ATPase is responsible for acidifying and maintaining the pH of intracellular compartments. Is present only in Golgi- and endosome-residing V-ATPase complexes; enzymes containing this subunit have a 4-fold lower ratio of proton transport to ATP hydrolysis than complexes containing the vacuolar isoform and do not dissociate V1 and V0 in response to glucose depletion. This chain is V-type proton ATPase subunit a, Golgi isoform (STV1), found in Saccharomyces cerevisiae (strain ATCC 204508 / S288c) (Baker's yeast).